The following is a 311-amino-acid chain: Protoheme IX farnesyltransferase (311 aa).

8 helical membrane-spanning segments follow: residues 30 to 50 (VVQL…PGWP), 55 to 75 (WGVA…AAAF), 108 to 128 (FAVL…NALT), 129 to 149 (MWLT…LLKP), 153 to 173 (QNIV…WAAM), 182 to 202 (WILC…LALY), 233 to 253 (FVLF…WFYL), and 287 to 307 (IWHL…GPLL).

The protein belongs to the UbiA prenyltransferase family. Protoheme IX farnesyltransferase subfamily.

It localises to the cell inner membrane. It carries out the reaction heme b + (2E,6E)-farnesyl diphosphate + H2O = Fe(II)-heme o + diphosphate. The protein operates within porphyrin-containing compound metabolism; heme O biosynthesis; heme O from protoheme: step 1/1. Converts heme B (protoheme IX) to heme O by substitution of the vinyl group on carbon 2 of heme B porphyrin ring with a hydroxyethyl farnesyl side group. In Methylibium petroleiphilum (strain ATCC BAA-1232 / LMG 22953 / PM1), this protein is Protoheme IX farnesyltransferase.